The chain runs to 190 residues: MIGKLTGTLLEKNPPEVLVDCHGVGYEVQVSMSTFYNLPAVGERVSLLTQFIVREDAQLLYGFGTAQERQAFRELIKISGVGPRTALSILSGMGVADLAQAVSLQEAGRLVKVPGIGKKTAERLLLELKGKLGADVGVRAHAANDNQADILQALLALGYNDKEAAAALKALPADVGVSEGIKLALKSLSK.

The interval 1 to 64 is domain I; the sequence is MIGKLTGTLL…EDAQLLYGFG (64 aa). A domain II region spans residues 65-137; that stretch reads TAQERQAFRE…LKGKLGADVG (73 aa). The tract at residues 137-141 is flexible linker; it reads GVRAH. Residues 142–190 form a domain III region; it reads AANDNQADILQALLALGYNDKEAAAALKALPADVGVSEGIKLALKSLSK.

This sequence belongs to the RuvA family. As to quaternary structure, homotetramer. Forms an RuvA(8)-RuvB(12)-Holliday junction (HJ) complex. HJ DNA is sandwiched between 2 RuvA tetramers; dsDNA enters through RuvA and exits via RuvB. An RuvB hexamer assembles on each DNA strand where it exits the tetramer. Each RuvB hexamer is contacted by two RuvA subunits (via domain III) on 2 adjacent RuvB subunits; this complex drives branch migration. In the full resolvosome a probable DNA-RuvA(4)-RuvB(12)-RuvC(2) complex forms which resolves the HJ.

The protein resides in the cytoplasm. In terms of biological role, the RuvA-RuvB-RuvC complex processes Holliday junction (HJ) DNA during genetic recombination and DNA repair, while the RuvA-RuvB complex plays an important role in the rescue of blocked DNA replication forks via replication fork reversal (RFR). RuvA specifically binds to HJ cruciform DNA, conferring on it an open structure. The RuvB hexamer acts as an ATP-dependent pump, pulling dsDNA into and through the RuvAB complex. HJ branch migration allows RuvC to scan DNA until it finds its consensus sequence, where it cleaves and resolves the cruciform DNA. The polypeptide is Holliday junction branch migration complex subunit RuvA (Acidovorax sp. (strain JS42)).